Reading from the N-terminus, the 313-residue chain is Ribosomal RNA small subunit methyltransferase H (313 aa).

Residues 35–37 (GGH), Asp55, Phe79, Asp100, and Gln107 contribute to the S-adenosyl-L-methionine site.

This sequence belongs to the methyltransferase superfamily. RsmH family.

The protein localises to the cytoplasm. The catalysed reaction is cytidine(1402) in 16S rRNA + S-adenosyl-L-methionine = N(4)-methylcytidine(1402) in 16S rRNA + S-adenosyl-L-homocysteine + H(+). Functionally, specifically methylates the N4 position of cytidine in position 1402 (C1402) of 16S rRNA. The protein is Ribosomal RNA small subunit methyltransferase H of Burkholderia ambifaria (strain ATCC BAA-244 / DSM 16087 / CCUG 44356 / LMG 19182 / AMMD) (Burkholderia cepacia (strain AMMD)).